A 193-amino-acid polypeptide reads, in one-letter code: ATP-dependent protease subunit HslV (193 aa).

The active site involves threonine 12. The Na(+) site is built by alanine 167, cysteine 170, and threonine 173.

The protein belongs to the peptidase T1B family. HslV subfamily. A double ring-shaped homohexamer of HslV is capped on each side by a ring-shaped HslU homohexamer. The assembly of the HslU/HslV complex is dependent on binding of ATP.

It localises to the cytoplasm. It carries out the reaction ATP-dependent cleavage of peptide bonds with broad specificity.. Allosterically activated by HslU binding. In terms of biological role, protease subunit of a proteasome-like degradation complex believed to be a general protein degrading machinery. This Bartonella quintana (strain Toulouse) (Rochalimaea quintana) protein is ATP-dependent protease subunit HslV.